The chain runs to 459 residues: Asparagine--tRNA ligase (459 aa).

This sequence belongs to the class-II aminoacyl-tRNA synthetase family. Homodimer.

The protein localises to the cytoplasm. It catalyses the reaction tRNA(Asn) + L-asparagine + ATP = L-asparaginyl-tRNA(Asn) + AMP + diphosphate + H(+). The chain is Asparagine--tRNA ligase from Pelobacter propionicus (strain DSM 2379 / NBRC 103807 / OttBd1).